Consider the following 201-residue polypeptide: NAD(P)H dehydrogenase (quinone) (201 aa).

Positions 4–191 (VLVLYYSMYG…KIAKCQGVHV (188 aa)) constitute a Flavodoxin-like domain. FMN is bound by residues 10–15 (SMYGHV) and 79–81 (TRF). Y12 is an NAD(+) binding site. Residue W99 coordinates substrate. FMN is bound by residues 114-120 (STGTQHG) and H135.

It belongs to the WrbA family. FMN is required as a cofactor.

It carries out the reaction a quinone + NADH + H(+) = a quinol + NAD(+). It catalyses the reaction a quinone + NADPH + H(+) = a quinol + NADP(+). This Hydrogenovibrio crunogenus (strain DSM 25203 / XCL-2) (Thiomicrospira crunogena) protein is NAD(P)H dehydrogenase (quinone).